The primary structure comprises 305 residues: MGFVPITLSAGQNPLTQFDGKIETHFLEPPAGTAFQIMQIYKPLPKGDKSGAYRGPPPHFHLHQTERFKVIKGRVGIEVNDKVTVLRPKDGVAICPAGNIHRFIIDVDPKHDQDGEDDEEEDDGEIVFMVNATDSGKDFVLDRIFLENWYGVRVDSFKYGTKIDFIQQCATFDGGDHYLPFPATLPEWVPMSWSVAIRTFLGFWVTVIIGRYVGGLLGYQPFYREYTTDWELAVAKMQGTWFYRRNVQTAYRAATSWKELREMVPYSDEGAANMGLADAKVGNGAAVKKAINDRAANNGEDKKNL.

It belongs to the oxidoreductase OpS7 family.

It functions in the pathway secondary metabolite biosynthesis. Functionally, oxidoreductase; part of the gene cluster that mediates the biosynthesis of the bibenzoquinone oosporein, a metabolite required for fungal virulence that acts by evading host immunity to facilitate fungal multiplication in insects. The non-reducing polyketide synthase OpS1 produces orsellinic acid by condensing acetyl-CoA with 3 malonyl-CoA units. Orsellinic acid is then hydroxylated to benzenetriol by the hydroxylase OpS4. The intermediate is oxidized either nonenzymatically to 5,5'-dideoxy-oosporein or enzymatically to benzenetetrol by the oxidoreductase OpS7. The latter is further dimerized to oosporein by the catalase OpS5. OpS6 probably functions en route for protecting cells against oxidative stress by scavenging any leaked free radical form of benzenetetrol by activating the thiol group of glutathione. This Beauveria bassiana (strain ARSEF 2860) (White muscardine disease fungus) protein is Oxidoreductase OpS7.